We begin with the raw amino-acid sequence, 268 residues long: CCAAT/enhancer-binding protein delta (268 aa).

3 disordered regions span residues 1–48, 97–132, and 152–219; these read MSAA…LGST, GLEL…DAPG, and AAQP…NQEM. Serine 2 is modified (N-acetylserine). Lysine 120 participates in a covalent cross-link: Glycyl lysine isopeptide (Lys-Gly) (interchain with G-Cter in SUMO). Residues 155 to 167 are compositionally biased toward pro residues; the sequence is PTPPTSPEPPRGS. A compositionally biased stretch (basic and acidic residues) spans 177-201; it reads VREKGAGKRGPDRGSPEYRQRRERN. Residues 191-254 form the bZIP domain; the sequence is SPEYRQRRER…AGLRQFFKKL (64 aa). The tract at residues 195–222 is basic motif; that stretch reads RQRRERNNIAVRKSRDKAKRRNQEMQQK. The interval 226 to 254 is leucine-zipper; that stretch reads LSAENEKLHQRVEQLTRDLAGLRQFFKKL.

The protein belongs to the bZIP family. C/EBP subfamily. In terms of assembly, binds DNA as a homodimer and as a heterodimer. Can form stable heterodimers with CEBPA, CEBPB and CEBPE. Directly interacts with SPI1/PU.1; this interaction does not affect DNA-binding properties of each partner. Interacts with PRDM16.

It localises to the nucleus. In terms of biological role, transcription activator that recognizes two different DNA motifs: the CCAAT homology common to many promoters and the enhanced core homology common to many enhancers. Important transcription factor regulating the expression of genes involved in immune and inflammatory responses. Transcriptional activator that enhances IL6 transcription alone and as heterodimer with CEBPB. The chain is CCAAT/enhancer-binding protein delta (Cebpd) from Mus musculus (Mouse).